The chain runs to 157 residues: MGIISFIFALAEDMLLAAIPAVGFAMVFNVPQRALRWCALLGAIGHGSRMIMMSAGFNIEWATFLAALLVGSIGIQWSRWYLAHPKIFTVAAVIPMFPGISAYTAMISAVKISHFGYSEEMMILLLSNFLKASSIVGALSIGLSIPGLWLYRKRPRV.

A run of 4 helical transmembrane segments spans residues 2–22 (GIIS…IPAV), 55–75 (AGFN…SIGI), 87–107 (IFTV…TAMI), and 129–149 (FLKA…PGLW).

Belongs to the ThrE exporter (TC 2.A.79) family. In terms of assembly, the transporter is composed of YjjB and YjjP.

It localises to the cell inner membrane. Involved in succinate export with YjjP. Both proteins are required for export. This chain is Probable succinate transporter subunit YjjB, found in Klebsiella pneumoniae subsp. pneumoniae (strain ATCC 700721 / MGH 78578).